The chain runs to 502 residues: ATP synthase subunit alpha (502 aa).

A disordered region spans residues 115–135 (VDGLGPINTTNTRPIESPAPG). 169–176 (GDRQTGKT) contributes to the ATP binding site.

The protein belongs to the ATPase alpha/beta chains family. As to quaternary structure, F-type ATPases have 2 components, CF(1) - the catalytic core - and CF(0) - the membrane proton channel. CF(1) has five subunits: alpha(3), beta(3), gamma(1), delta(1), epsilon(1). CF(0) has three main subunits: a(1), b(2) and c(9-12). The alpha and beta chains form an alternating ring which encloses part of the gamma chain. CF(1) is attached to CF(0) by a central stalk formed by the gamma and epsilon chains, while a peripheral stalk is formed by the delta and b chains.

The protein localises to the cell membrane. It catalyses the reaction ATP + H2O + 4 H(+)(in) = ADP + phosphate + 5 H(+)(out). Produces ATP from ADP in the presence of a proton gradient across the membrane. The alpha chain is a regulatory subunit. The sequence is that of ATP synthase subunit alpha from Bacillus cereus (strain B4264).